A 307-amino-acid polypeptide reads, in one-letter code: Coproporphyrin III ferrochelatase (307 aa).

Fe-coproporphyrin III contacts are provided by residues Tyr-12, Arg-29, 45–46, Ser-53, and Tyr-124; that span reads RY. Fe(2+)-binding residues include His-181 and Glu-263.

Belongs to the ferrochelatase family.

It is found in the cytoplasm. It catalyses the reaction Fe-coproporphyrin III + 2 H(+) = coproporphyrin III + Fe(2+). The protein operates within porphyrin-containing compound metabolism; protoheme biosynthesis. Its function is as follows. Involved in coproporphyrin-dependent heme b biosynthesis. Catalyzes the insertion of ferrous iron into coproporphyrin III to form Fe-coproporphyrin III. It can also insert iron into protoporphyrin IX, but it has a much stronger preference for coproprophyrin III as the substrate. This is Coproporphyrin III ferrochelatase from Staphylococcus aureus (strain NCTC 8325 / PS 47).